The chain runs to 293 residues: Ribonuclease H2 subunit B (293 aa).

The disordered stretch occupies residues 251–278; sequence KRPQNSDITSSLLKKPNRKQATKKSKYF. Residues 265 to 276 show a composition bias toward basic residues; that stretch reads KPNRKQATKKSK.

Belongs to the RNase H2 subunit B family. As to quaternary structure, component of the RNase H2 complex.

The protein localises to the nucleus. It is found in the cytoplasm. Its function is as follows. Non catalytic subunit of RNase H2, an endonuclease that specifically degrades the RNA of RNA:DNA hybrids. Participates in DNA replication, possibly by mediating the removal of lagging-strand Okazaki fragment RNA primers during DNA replication. Mediates the excision of single ribonucleotides from DNA:RNA duplexes. The polypeptide is Ribonuclease H2 subunit B (rnh202) (Schizosaccharomyces pombe (strain 972 / ATCC 24843) (Fission yeast)).